A 308-amino-acid polypeptide reads, in one-letter code: Alternaria stem canker resistance protein 1 (308 aa).

Transmembrane regions (helical) follow at residues tyrosine 21–leucine 41, phenylalanine 82–phenylalanine 102, leucine 128–glutamate 148, valine 165–alanine 185, phenylalanine 213–isoleucine 233, and isoleucine 254–tryptophan 274. In terms of domain architecture, TLC spans asparagine 73–leucine 287.

Its subcellular location is the endoplasmic reticulum membrane. Mediates resistance to sphinganine-analog mycotoxins (SAMs) by restoring the sphingolipid biosynthesis. Could salvage the transport of GPI-anchored proteins from the endoplasmic reticulum to the Golgi apparatus in ceramides-depleted cells after SAM exposure. In Solanum lycopersicum (Tomato), this protein is Alternaria stem canker resistance protein 1.